The chain runs to 260 residues: Creatinine amidohydrolase (260 aa).

E34 is a binding site for Mn(2+). Positions 34, 36, and 45 each coordinate Zn(2+). D45 contacts Mn(2+). Creatine is bound at residue S78. Position 120 (H120) interacts with Mn(2+). A Zn(2+)-binding site is contributed by H120. Positions 121, 174, 175, and 178 each coordinate creatine. E183 contacts Zn(2+).

This sequence belongs to the creatininase superfamily. Homohexamer; trimer of dimers. The cofactor is Zn(2+). It depends on Mn(2+) as a cofactor.

The enzyme catalyses creatinine + H2O = creatine. It participates in amine and polyamine degradation; creatinine degradation. Is markedly inactivated in vitro by heavy metal ions, N-bromosuccinimide, ethoxyformic anhydride, and dye-sensitized photooxidation. Its function is as follows. Cyclic amidohydrolase that catalyzes the reversible conversion of creatinine to creatine. Is also active toward glycocyamidine, though the reaction rate is very low, but it is completely inert toward hydantoin and its derivatives. This is Creatinine amidohydrolase (crnA) from Pseudomonas putida (Arthrobacter siderocapsulatus).